A 256-amino-acid polypeptide reads, in one-letter code: Probable transcriptional regulatory protein A1I_03240 (256 aa).

Positions 1–21 (MAGHSKFKNIQHRKGAQDKKR) are disordered.

Belongs to the TACO1 family.

The protein localises to the cytoplasm. The protein is Probable transcriptional regulatory protein A1I_03240 of Rickettsia bellii (strain OSU 85-389).